Here is a 456-residue protein sequence, read N- to C-terminus: MKYTLEGSNARVIAKAVQSLSKVGKEMFIEIDQQSLQMRAINATQSAVGSISFKRSMFEVYDMPPHSDFYCKISMKGCLAVFRNMNEVEYCELNLLDNQTNLQVNLRCKLETTKEATISIIDDQNINTNINTDQMPNIIRGDHKLLTDISNNFNSSEEELTLEANSGSVVAKNYIEGARVNDKFMRTQLKLKPSEFEQYQVTKETVITFCIKEFRAFLLFAECLNASLTLEFDEAGMPFLLKIKKHGEIECLLIMSTLSPDDISFSEDYCQKDLTVQDEDVRAAAAKRKSSVSKPNVTNKRKGSSSEPAAVQPKRRVEETQLESSLDNPLFQFRDSEAPSVQHPRILAEVDTVVLIEDEAEQEALMLAAADAALEASMAPAPEPPNSTEVCFINTDDSQQPKPAKSSSDEDETIPQSPERPNKVLGVLLGLLQGCVSRLKTMLRLDEHLISGYELL.

The Nuclear localization signal signature appears at 300–302; it reads KRK.

It belongs to the rad9 family. Component of the 9-1-1 checkpoint clamp complex consisting of Rad9 isoform A, Rad1 and Hus1-like; the interaction with Hus1-like is direct. Does not interact directly with Rad1; this interaction is probably mediated by Hus1-like. This complex probably also forms with Rad9 isoform B, however 9-1-1 complex containing Rad9 isoform A localizes to the nuclear periphery. Interacts with Brca2. Expressed in ovary.

The protein localises to the nucleus envelope. The protein resides in the nucleus. In terms of biological role, component of the Rad9-Rad1-Hus1 (9-1-1) checkpoint clamp complex. Its function is as follows. Targets the 9-1-1 complex to the nuclear periphery. Targeting to the nuclear periphery is disrupted in the presence of persistent double stranded break DNA damage, possibly as a function of the meiotic checkpoint. This Drosophila melanogaster (Fruit fly) protein is Cell cycle checkpoint control protein Rad9.